The following is a 420-amino-acid chain: 26S proteasome non-ATPase regulatory subunit 4 (420 aa).

In terms of domain architecture, VWFA spans 1-174 (MSQEATIIAV…TGSHLISVAP (174 aa)). UIM domains are found at residues 210–229 (AEDPDLLYALRVSMEDQRMR), 255–274 (SEEAMLQQALAMSMQMNNTE), and 288–307 (SEEDQIAYALRMSLQQMGEE). A disordered region spans residues 392 to 420 (RKAINALTKSQSQRGSKKDEKEDEDKQNS). The span at 407–420 (SKKDEKEDEDKQNS) shows a compositional bias: basic and acidic residues.

The protein belongs to the proteasome subunit S5A family. In terms of assembly, the 26S proteasome is composed of a core protease, known as the 20S proteasome, capped at one or both ends by the 19S regulatory complex (RC). The RC is composed of at least 18 different subunits in two subcomplexes, the base and the lid, which form the portions proximal and distal to the 20S proteolytic core, respectively.

Binds and presumably selects ubiquitin-conjugates for destruction. In Schistosoma mansoni (Blood fluke), this protein is 26S proteasome non-ATPase regulatory subunit 4.